We begin with the raw amino-acid sequence, 301 residues long: Ornithine carbamoyltransferase (301 aa).

Residues 47–50, Gln74, Arg98, and 125–128 contribute to the carbamoyl phosphate site; these read STRT and HPMQ. Residues Asn156, Asp220, and 224 to 225 each bind L-ornithine; that span reads SM. Carbamoyl phosphate is bound by residues 260–261 and Arg288; that span reads CL.

Belongs to the aspartate/ornithine carbamoyltransferase superfamily. OTCase family.

It localises to the cytoplasm. It carries out the reaction carbamoyl phosphate + L-ornithine = L-citrulline + phosphate + H(+). Its pathway is amino-acid biosynthesis; L-arginine biosynthesis; L-arginine from L-ornithine and carbamoyl phosphate: step 1/3. Reversibly catalyzes the transfer of the carbamoyl group from carbamoyl phosphate (CP) to the N(epsilon) atom of ornithine (ORN) to produce L-citrulline. The polypeptide is Ornithine carbamoyltransferase (Picrophilus torridus (strain ATCC 700027 / DSM 9790 / JCM 10055 / NBRC 100828 / KAW 2/3)).